A 413-amino-acid polypeptide reads, in one-letter code: Clusterin-associated protein 1 (413 aa).

Positions 198-291 form a coiled coil; sequence KTKDLLNNVA…ERFEEAKNTL (94 aa). A disordered region spans residues 305-413; the sequence is LLKSGSNDDS…EPLDESDNDF (109 aa). Acidic residues-rich tracts occupy residues 312 to 328 and 360 to 388; these read DDSD…DSEL and DSDD…EDES. Ser314, Ser324, and Ser326 each carry phosphoserine. Ser409 is modified (phosphoserine).

Belongs to the CLUAP1 family. In terms of assembly, interacts with CLU/clusterin. Interacts with UBXN10; the interaction is direct. Expressed in testis, thyroid and trachea and to a lower extent in spinal cord and adrenal gland. Highly expressed in colon cancer and osteosarcoma cell lines.

It localises to the cell projection. The protein localises to the cilium. Its subcellular location is the nucleus. Functionally, required for cilia biogenesis. Appears to function within the multiple intraflagellar transport complex B (IFT-B). Key regulator of hedgehog signaling. This is Clusterin-associated protein 1 (CLUAP1) from Homo sapiens (Human).